A 428-amino-acid polypeptide reads, in one-letter code: Glutamate-1-semialdehyde 2,1-aminomutase 1 (428 aa).

Lysine 267 is modified (N6-(pyridoxal phosphate)lysine).

Belongs to the class-III pyridoxal-phosphate-dependent aminotransferase family. HemL subfamily. As to quaternary structure, homodimer. It depends on pyridoxal 5'-phosphate as a cofactor.

The protein resides in the cytoplasm. It catalyses the reaction (S)-4-amino-5-oxopentanoate = 5-aminolevulinate. Its pathway is porphyrin-containing compound metabolism; protoporphyrin-IX biosynthesis; 5-aminolevulinate from L-glutamyl-tRNA(Glu): step 2/2. This is Glutamate-1-semialdehyde 2,1-aminomutase 1 from Staphylococcus aureus (strain MW2).